We begin with the raw amino-acid sequence, 642 residues long: Threonine--tRNA ligase (642 aa).

The region spanning Met1–Ser61 is the TGS domain. A catalytic region spans residues Asp243–Pro534. Zn(2+) contacts are provided by Cys334, His385, and His511.

This sequence belongs to the class-II aminoacyl-tRNA synthetase family. Homodimer. Zn(2+) is required as a cofactor.

It is found in the cytoplasm. It catalyses the reaction tRNA(Thr) + L-threonine + ATP = L-threonyl-tRNA(Thr) + AMP + diphosphate + H(+). Its function is as follows. Catalyzes the attachment of threonine to tRNA(Thr) in a two-step reaction: L-threonine is first activated by ATP to form Thr-AMP and then transferred to the acceptor end of tRNA(Thr). Also edits incorrectly charged L-seryl-tRNA(Thr). The chain is Threonine--tRNA ligase from Buchnera aphidicola subsp. Schizaphis graminum (strain Sg).